A 417-amino-acid polypeptide reads, in one-letter code: Serine hydroxymethyltransferase (417 aa).

Residues Leu121 and 125–127 each bind (6S)-5,6,7,8-tetrahydrofolate; that span reads GHL. Lys229 carries the N6-(pyridoxal phosphate)lysine modification. 355-357 lines the (6S)-5,6,7,8-tetrahydrofolate pocket; sequence SPF.

This sequence belongs to the SHMT family. Homodimer. Requires pyridoxal 5'-phosphate as cofactor.

Its subcellular location is the cytoplasm. It catalyses the reaction (6R)-5,10-methylene-5,6,7,8-tetrahydrofolate + glycine + H2O = (6S)-5,6,7,8-tetrahydrofolate + L-serine. It functions in the pathway one-carbon metabolism; tetrahydrofolate interconversion. Its pathway is amino-acid biosynthesis; glycine biosynthesis; glycine from L-serine: step 1/1. Functionally, catalyzes the reversible interconversion of serine and glycine with tetrahydrofolate (THF) serving as the one-carbon carrier. This reaction serves as the major source of one-carbon groups required for the biosynthesis of purines, thymidylate, methionine, and other important biomolecules. Also exhibits THF-independent aldolase activity toward beta-hydroxyamino acids, producing glycine and aldehydes, via a retro-aldol mechanism. This is Serine hydroxymethyltransferase from Tolumonas auensis (strain DSM 9187 / NBRC 110442 / TA 4).